Consider the following 616-residue polypeptide: Elongation factor 4 (616 aa).

In terms of domain architecture, tr-type G spans 14 to 195; the sequence is SRIRNFCIIA…EVIRQVPPPV (182 aa). Residues 26-31 and 142-145 each bind GTP; these read DHGKST and NKID.

The protein belongs to the TRAFAC class translation factor GTPase superfamily. Classic translation factor GTPase family. LepA subfamily.

The protein localises to the cell membrane. The catalysed reaction is GTP + H2O = GDP + phosphate + H(+). Required for accurate and efficient protein synthesis under certain stress conditions. May act as a fidelity factor of the translation reaction, by catalyzing a one-codon backward translocation of tRNAs on improperly translocated ribosomes. Back-translocation proceeds from a post-translocation (POST) complex to a pre-translocation (PRE) complex, thus giving elongation factor G a second chance to translocate the tRNAs correctly. Binds to ribosomes in a GTP-dependent manner. This chain is Elongation factor 4, found in Nocardia farcinica (strain IFM 10152).